Here is a 302-residue protein sequence, read N- to C-terminus: tRNA pseudouridine synthase B (302 aa).

His-40 lines the substrate pocket. Asp-45 functions as the Nucleophile in the catalytic mechanism. 3 residues coordinate substrate: Tyr-73, Tyr-178, and Leu-199.

This sequence belongs to the pseudouridine synthase TruB family. Type 1 subfamily.

The enzyme catalyses uridine(55) in tRNA = pseudouridine(55) in tRNA. Its function is as follows. Responsible for synthesis of pseudouridine from uracil-55 in the psi GC loop of transfer RNAs. The polypeptide is tRNA pseudouridine synthase B (Buchnera aphidicola subsp. Baizongia pistaciae (strain Bp)).